The chain runs to 434 residues: Probable phosphoglucosamine mutase (434 aa).

Catalysis depends on S91, which acts as the Phosphoserine intermediate. Residues S91, D229, D231, and D233 each coordinate Mg(2+). S91 is modified (phosphoserine).

It belongs to the phosphohexose mutase family. Mg(2+) is required as a cofactor. Activated by phosphorylation.

It catalyses the reaction alpha-D-glucosamine 1-phosphate = D-glucosamine 6-phosphate. Catalyzes the conversion of glucosamine-6-phosphate to glucosamine-1-phosphate. The chain is Probable phosphoglucosamine mutase from Methanosarcina acetivorans (strain ATCC 35395 / DSM 2834 / JCM 12185 / C2A).